The primary structure comprises 555 residues: Formate--tetrahydrofolate ligase (555 aa).

ATP is bound at residue 64–71 (TKAGIGKT).

This sequence belongs to the formate--tetrahydrofolate ligase family.

It catalyses the reaction (6S)-5,6,7,8-tetrahydrofolate + formate + ATP = (6R)-10-formyltetrahydrofolate + ADP + phosphate. Its pathway is one-carbon metabolism; tetrahydrofolate interconversion. In Parabacteroides distasonis (strain ATCC 8503 / DSM 20701 / CIP 104284 / JCM 5825 / NCTC 11152), this protein is Formate--tetrahydrofolate ligase.